The sequence spans 256 residues: Small ribosomal subunit protein eS1 (256 aa).

Positions 1–18 (MAVGKNKRLSKGKKGIKK) are enriched in basic residues. The tract at residues 1 to 20 (MAVGKNKRLSKGKKGIKKRT) is disordered. N-acetylalanine; partial is present on Ala-2.

The protein belongs to the eukaryotic ribosomal protein eS1 family. In terms of assembly, component of the small ribosomal subunit. Mature ribosomes consist of a small (40S) and a large (60S) subunit. The 40S subunit contains about 33 different proteins and 1 molecule of RNA (18S). The 60S subunit contains about 49 different proteins and 3 molecules of RNA (25S, 5.8S and 5S).

Its subcellular location is the cytoplasm. In Emericella nidulans (strain FGSC A4 / ATCC 38163 / CBS 112.46 / NRRL 194 / M139) (Aspergillus nidulans), this protein is Small ribosomal subunit protein eS1 (rps1).